Reading from the N-terminus, the 716-residue chain is Fatty acid oxidation complex subunit alpha (716 aa).

Residues 1 to 189 are enoyl-CoA hydratase/isomerase; sequence MIYQSPTIQV…KVGAVDAVVA (189 aa). Residue aspartate 296 participates in substrate binding. The 3-hydroxyacyl-CoA dehydrogenase stretch occupies residues 311 to 716; it reads KEVNNAAVLG…AANNGSYYQA (406 aa). Residues methionine 324, aspartate 343, 400 to 402, lysine 407, and serine 429 each bind NAD(+); that span reads VVE. Histidine 450 functions as the For 3-hydroxyacyl-CoA dehydrogenase activity in the catalytic mechanism. An NAD(+)-binding site is contributed by asparagine 453. Positions 500 and 660 each coordinate substrate.

In the N-terminal section; belongs to the enoyl-CoA hydratase/isomerase family. This sequence in the C-terminal section; belongs to the 3-hydroxyacyl-CoA dehydrogenase family. Heterotetramer of two alpha chains (FadB) and two beta chains (FadA).

It catalyses the reaction a (3S)-3-hydroxyacyl-CoA + NAD(+) = a 3-oxoacyl-CoA + NADH + H(+). It carries out the reaction a (3S)-3-hydroxyacyl-CoA = a (2E)-enoyl-CoA + H2O. The enzyme catalyses a 4-saturated-(3S)-3-hydroxyacyl-CoA = a (3E)-enoyl-CoA + H2O. The catalysed reaction is (3S)-3-hydroxybutanoyl-CoA = (3R)-3-hydroxybutanoyl-CoA. It catalyses the reaction a (3Z)-enoyl-CoA = a 4-saturated (2E)-enoyl-CoA. It carries out the reaction a (3E)-enoyl-CoA = a 4-saturated (2E)-enoyl-CoA. The protein operates within lipid metabolism; fatty acid beta-oxidation. Functionally, involved in the aerobic and anaerobic degradation of long-chain fatty acids via beta-oxidation cycle. Catalyzes the formation of 3-oxoacyl-CoA from enoyl-CoA via L-3-hydroxyacyl-CoA. It can also use D-3-hydroxyacyl-CoA and cis-3-enoyl-CoA as substrate. The polypeptide is Fatty acid oxidation complex subunit alpha (Shewanella baltica (strain OS223)).